The sequence spans 225 residues: MASPSRQAPLGGSGLLHGSRARSYGSLVQSACSPVRERRLEHQLAPGDTLAGLALKYGVTMEQIKRANRLYTNDSIFLKKTLHIPILTEPRDLFNGLDSEEEKDGEEAVQPSKDEVRPHSAERKKRERGLGHANGEPLPTAGQEPARHDLSASDFLKKLDSQISLSKKAAAQKLKKGESGIPGEDSSLHLSSPRMQQRAVLGPVPLTQTSRTRTLRDQEDEIFKL.

A phosphoserine mark is found at S23 and S33. A LysM domain is found at 40 to 84 (LEHQLAPGDTLAGLALKYGVTMEQIKRANRLYTNDSIFLKKTLHI). Positions 97 to 153 (LDSEEEKDGEEAVQPSKDEVRPHSAERKKRERGLGHANGEPLPTAGQEPARHDLSAS) are disordered. Residues 98-107 (DSEEEKDGEE) are compositionally biased toward acidic residues. At S99 the chain carries Phosphoserine. The span at 112–121 (SKDEVRPHSA) shows a compositional bias: basic and acidic residues. Residues S164, S179, S192, and S210 each carry the phosphoserine modification. The segment at 170 to 225 (AAQKLKKGESGIPGEDSSLHLSSPRMQQRAVLGPVPLTQTSRTRTLRDQEDEIFKL) is disordered. The span at 214–225 (TLRDQEDEIFKL) shows a compositional bias: basic and acidic residues.

The sequence is that of LysM and putative peptidoglycan-binding domain-containing protein 1 (LYSMD1) from Bos taurus (Bovine).